The following is a 431-amino-acid chain: Glucose-1-phosphate adenylyltransferase (431 aa).

K39 serves as a coordination point for beta-D-fructose 1,6-bisphosphate. AMP is bound by residues R40, H46, and R52. Y114 serves as a coordination point for alpha-D-glucose 1-phosphate. R130 serves as a coordination point for AMP. Residues G179, 194–195 (EK), and S212 each bind alpha-D-glucose 1-phosphate. AMP is bound by residues E370 and R386. Residues 419–423 (REMLR) and 429–431 (QER) each bind beta-D-fructose 1,6-bisphosphate.

The protein belongs to the bacterial/plant glucose-1-phosphate adenylyltransferase family. As to quaternary structure, homotetramer.

The catalysed reaction is alpha-D-glucose 1-phosphate + ATP + H(+) = ADP-alpha-D-glucose + diphosphate. It participates in glycan biosynthesis; glycogen biosynthesis. With respect to regulation, allosterically activated by fructose-1,6-bisphosphate (F16BP) and inhibited by AMP. In terms of biological role, involved in the biosynthesis of ADP-glucose, a building block required for the elongation reactions to produce glycogen. Catalyzes the reaction between ATP and alpha-D-glucose 1-phosphate (G1P) to produce pyrophosphate and ADP-Glc. This chain is Glucose-1-phosphate adenylyltransferase, found in Salmonella paratyphi C (strain RKS4594).